Reading from the N-terminus, the 367-residue chain is Mitochondrial GTPase 1 (367 aa).

The CP-type G domain occupies 42-228 (LKTFEKLLPQ…LIDTPGIGVP (187 aa)). Residues 89–92 (TRKD), 160–165 (NVGKST), and G224 contribute to the GTP site.

This sequence belongs to the TRAFAC class YlqF/YawG GTPase family. MTG1 subfamily.

It is found in the mitochondrion inner membrane. Its function is as follows. Mitochondrial GTPase involved in assembly of the large ribosomal subunit. Plays a role in expression of the mitochondrial translational machinery. The sequence is that of Mitochondrial GTPase 1 (MTG1) from Saccharomyces cerevisiae (strain ATCC 204508 / S288c) (Baker's yeast).